The primary structure comprises 291 residues: Protease HtpX homolog (291 aa).

The next 2 membrane-spanning stretches (helical) occupy residues 4–24 (IVLF…SARL) and 38–58 (MGML…ISLM). A Zn(2+)-binding site is contributed by His144. The active site involves Glu145. A Zn(2+)-binding site is contributed by His148. The next 2 helical transmembrane spans lie at 152–172 (GDMV…IFLA) and 199–219 (VSSI…VMFF). Glu224 is a Zn(2+) binding site.

The protein belongs to the peptidase M48B family. It depends on Zn(2+) as a cofactor.

It is found in the cell inner membrane. The sequence is that of Protease HtpX homolog from Prosthecochloris aestuarii (strain DSM 271 / SK 413).